Here is a 66-residue protein sequence, read N- to C-terminus: MPKMKTKSAAKKRFKITGTGKVKAAAAGKRHGMIKRSNKFIRDARGTMVLADADAKIVKQFLPNGL.

This sequence belongs to the bacterial ribosomal protein bL35 family.

This chain is Large ribosomal subunit protein bL35, found in Brucella melitensis biotype 1 (strain ATCC 23456 / CCUG 17765 / NCTC 10094 / 16M).